We begin with the raw amino-acid sequence, 1482 residues long: MRGRRQEDIATTSSAPSTSTSHKKKTVSSNGSFRPRTQSNPGGKMEMYDHFYKNFQRPPMAPVYYPTSEEFADPIEYVAKIRPDAERYGVVKIVPPSDFKPPFAIDKEKFTFRPRTQKLNEVEAIVKEKHTFIERLVNFNRYSGLQFEFPVDRDGNVVDLYRLHRIVQNFGGCEEVNDEERWRDVAREYLPKEQMTRGVPSYFINLIRAHYNLHIEPFNRNLKEKAMKNEDESDDELEELKHKYQHHHGTMRSEPENTDGKNTEDVEEECPMSMQSGRRRSKNKKPVPAKKSSNGTPKKGSRGKKNSKTEEDEEENEDVIEQVYCVSCNEGKDEDLLLLCDIEGCNSGRHTYCCDPVLDEVPEGEWRCPKCIESEDAKIGLDWGFYDAETEYNLNTFTEFANKWKCDYFGVDNVSKVSCDALEKEFWKNVVSHDNPVAVKYGADLITSRVGSGFPRKEDKHTGPDSKLKQQYANHAWNLNNMPVLSESVLSYFNTGISGMMVPWVYVGMCFSTFCWHTEDHWTYSVNYNHFGERKIWYGVGGDDAEKFEEALKRLAPGLTGRQRDLFHHMTTAANPSLLRSLGVPIYSVHQNAGEFVITFPRAYHAGYNEGLNFAEAVNFAPIDWLAKGRECVQSYSNVRRYLVFSHDELLFKMIEAMDRLGLSTTLAAYDELKRVIEKQKRLRQFIAQLGVPARNVEQVAFEKIPDEQRSCRFCKTTLFMCALICNKHKRMTCVEHHDHLCKTCTPKDYKYQYRYEIDNLTHLFDELGKRTVDTAGWQEDDDDMYTQEEMPKLEPMVDLYNVEEQSSSRQKNQVHNIIAIQHTAKSAIEKANQLLFKKVRTRTKTRCQRADTRTDADGVKSLIEQMQGMDCNLSGLIDKLQKFLDQIDAWRSKAQIMMSQEHKYSKDDFEHFIEEGDEYDIKLSEIEELRKVVGMKEWSERAIEITSWAPTSNMEKDIDFEYKMRYTNKDVIALIREGSRSSSNHTSQLIAKLQHMLAEANKREAEATEYFDNPSLDKLQSIWKNLRTSDWFYEPYINLVRFEIGQIAKIKSMIDSTIPALSGLDLKPQLLRLGDSSITFAKAVELSKACELSKTLHKSQEHSSLLELINRMNLFTERIAKLFKPMNSYHNLFEIVSERDDLTPLAEGQVLQLYYQGETINSGNEWHQIKDFDSLEQMLHHQSSLREMQSRIFEKVKQTNSARGLEGCCCLGGNKSDSSESVLSCIMCESQFHVRCCEWSTFFQHLPKGCFMCVRCLRGQRPVIDDVANALNGTPSGCMETHLVRNLIQKSRIITQNLMDCSNKRQSGEVASDEMCKKALFDWLACEIMNPNGLPKAVELIHEFFGDYLEKQASAALELQQRPVKSKPSASLFDPKLNSKRKRPNPSQKDSSKSKSRKRQGQISPIDYCEEETEFKSCQARSCLKPFGDSVNWVMCDAGCKNWFHVICVGFTLREINDMHEYRCSSCLDHADSPASSVSTE.

The tract at residues 1–45 (MRGRRQEDIATTSSAPSTSTSHKKKTVSSNGSFRPRTQSNPGGKM) is disordered. Over residues 11 to 20 (TTSSAPSTST) the composition is skewed to low complexity. The segment covering 30–41 (NGSFRPRTQSNP) has biased composition (polar residues). Residues 61-102 (APVYYPTSEEFADPIEYVAKIRPDAERYGVVKIVPPSDFKPP) enclose the JmjN domain. Residues 126 to 223 (VKEKHTFIER…HIEPFNRNLK (98 aa)) form the ARID domain. A disordered region spans residues 244-316 (YQHHHGTMRS…SKTEEDEEEN (73 aa)). The segment covering 251-264 (MRSEPENTDGKNTE) has biased composition (basic and acidic residues). A compositionally biased stretch (basic residues) spans 277–288 (GRRRSKNKKPVP). A PHD-type 1 zinc finger spans residues 322–374 (QVYCVSCNEGKDEDLLLLCDIEGCNSGRHTYCCDPVLDEVPEGEWRCPKCIES). Residues 471 to 637 (QYANHAWNLN…KGRECVQSYS (167 aa)) enclose the JmjC domain. Positions 517, 520, and 605 each coordinate Fe cation. A PHD-type 2 zinc finger spans residues 1206-1260 (LEGCCCLGGNKSDSSESVLSCIMCESQFHVRCCEWSTFFQHLPKGCFMCVRCLRG). The tract at residues 1361 to 1403 (QQRPVKSKPSASLFDPKLNSKRKRPNPSQKDSSKSKSRKRQGQ) is disordered. Residues 1416–1471 (FKSCQARSCLKPFGDSVNWVMCDAGCKNWFHVICVGFTLREINDMHEYRCSSCLDH) form a PHD-type 3 zinc finger.

The protein belongs to the JARID1 histone demethylase family. The cofactor is Fe(2+).

The protein resides in the nucleus. It catalyses the reaction N(6),N(6),N(6)-trimethyl-L-lysyl(4)-[histone H3] + 3 2-oxoglutarate + 3 O2 = L-lysyl(4)-[histone H3] + 3 formaldehyde + 3 succinate + 3 CO2. Its function is as follows. Histone demethylase that specifically demethylates 'Lys-4' of histone H3, thereby playing a central role in histone code. Does not demethylate histone H3 'Lys-9', H3 'Lys-27', H3 'Lys-36', H3 'Lys-79' or H4 'Lys-20'. Demethylates trimethylated and dimethylated but not monomethylated H3 'Lys-4'. Involved in larval development and vulva formation. The chain is Lysine-specific demethylase rbr-2 (rbr-2) from Caenorhabditis briggsae.